The primary structure comprises 396 residues: Transcription factor IIIB 50 kDa subunit (396 aa).

Residues 3–36 form a TFIIB-type zinc finger; it reads GAKRCPDCGSSEIVEDAHYSQDQLVCADCGCILS. Zn(2+) contacts are provided by cysteine 7, cysteine 10, cysteine 28, and cysteine 31. Residues 173 to 249 form repeat 2; sequence VKSHCRSFKL…SRRLSCSLSR (77 aa). At cysteine 342 the chain carries Cysteine sulfenic acid (-SOH).

This sequence belongs to the TFIIB family. Component of TFIIIB complexes. Interacts with TBP and forms a ternary complex with TBp and target DNA sequences. In terms of processing, in response to oxidative stress, a Cys-residue is reversibly oxidized to cysteine sulfenic acid. This impairs formation of a ternary complex with TBP and DNA and down-regulates expression of target genes in response to oxidative stress.

The protein resides in the nucleus. General activator of RNA polymerase III transcription. Factor exclusively required for RNA polymerase III transcription of genes with promoter elements upstream of the initiation sites. Contributes to the regulation of gene expression; functions as activator in the absence of oxidative stress. Down-regulates expression of target genes in response to oxidative stress. Overexpression protects cells against apoptosis in response to oxidative stress. The protein is Transcription factor IIIB 50 kDa subunit (brf2) of Xenopus laevis (African clawed frog).